Consider the following 537-residue polypeptide: T-complex protein 1 subunit theta (537 aa).

It belongs to the TCP-1 chaperonin family. In terms of assembly, heterooligomeric complex.

It is found in the cytoplasm. Molecular chaperone; assists the folding of proteins upon ATP hydrolysis. Known to play a role, in vitro, in the folding of actin and tubulin. The polypeptide is T-complex protein 1 subunit theta (cct8) (Dictyostelium discoideum (Social amoeba)).